A 305-amino-acid chain; its full sequence is Nucleotide-binding protein Mjls_2437 (305 aa).

28 to 35 (GLSGAGRG) contributes to the ATP binding site. A GTP-binding site is contributed by 79–82 (DVRS).

It belongs to the RapZ-like family.

Functionally, displays ATPase and GTPase activities. This is Nucleotide-binding protein Mjls_2437 from Mycobacterium sp. (strain JLS).